The primary structure comprises 258 residues: Acetylglutamate kinase (258 aa).

Substrate is bound by residues 41-42 (GG), Arg-63, and Asn-156.

The protein belongs to the acetylglutamate kinase family. ArgB subfamily.

It localises to the cytoplasm. It carries out the reaction N-acetyl-L-glutamate + ATP = N-acetyl-L-glutamyl 5-phosphate + ADP. It functions in the pathway amino-acid biosynthesis; L-arginine biosynthesis; N(2)-acetyl-L-ornithine from L-glutamate: step 2/4. Catalyzes the ATP-dependent phosphorylation of N-acetyl-L-glutamate. In Geobacillus kaustophilus (strain HTA426), this protein is Acetylglutamate kinase.